A 385-amino-acid polypeptide reads, in one-letter code: Cell division protein FtsZ (385 aa).

GTP is bound by residues 37–41 (GGGSN), 125–127 (GTG), E156, K160, and D204.

Belongs to the FtsZ family. As to quaternary structure, homodimer. Polymerizes to form a dynamic ring structure in a strictly GTP-dependent manner. Interacts directly with several other division proteins.

It localises to the cytoplasm. Its function is as follows. Essential cell division protein that forms a contractile ring structure (Z ring) at the future cell division site. The regulation of the ring assembly controls the timing and the location of cell division. One of the functions of the FtsZ ring is to recruit other cell division proteins to the septum to produce a new cell wall between the dividing cells. Binds GTP and shows GTPase activity. This Helicobacter pylori (strain J99 / ATCC 700824) (Campylobacter pylori J99) protein is Cell division protein FtsZ.